The following is a 361-amino-acid chain: Cdc42 effector protein 1 (361 aa).

The interval 1 to 29 is disordered; it reads MPGPQGAGGAPAMNLGKLSPVGWVSSSQG. S19 and S27 each carry phosphoserine. T34 bears the Phosphothreonine mark. The CRIB domain occupies 38–52; the sequence is ISPPLGDFRHTMHVG. S39 is modified (phosphoserine). R53 carries the omega-N-methylarginine modification. S65, S73, S77, S101, S113, S121, S139, S180, S190, S192, and S195 each carry phosphoserine. The segment at 161-186 is disordered; sequence CTISRLPRPEKPRDRDRDSSFPAEPE. Positions 167 to 186 are enriched in basic and acidic residues; it reads PRPEKPRDRDRDSSFPAEPE. Disordered stretches follow at residues 218–300 and 320–361; these read EGSA…SRHH and SWGS…EVKV. Tandem repeats lie at residues 220–226, 229–235, 236–242, and 243–249. Residues 220–249 form a 4 X 7 AA tandem repeats of [PT]-[AT]-A-[ENT]-[PT]-[PTS]-[AG] region; that stretch reads SAAETPAPAPAASPPASVANPPAPASSPSL. S270, S320, and S323 each carry phosphoserine. A compositionally biased stretch (polar residues) spans 332-347; it reads QAGSRTPVPSTVQANT. Acidic residues predominate over residues 351–361; sequence ADAEEDDEVKV.

Belongs to the BORG/CEP family. As to quaternary structure, interacts with RHOQ and CDC42, in a GTP-dependent manner.

It is found in the endomembrane system. The protein localises to the cytoplasm. Its subcellular location is the cytoskeleton. Probably involved in the organization of the actin cytoskeleton. Induced membrane extensions in fibroblasts. This chain is Cdc42 effector protein 1, found in Bos taurus (Bovine).